The sequence spans 288 residues: Probable coatomer subunit epsilon (288 aa).

A Phosphoserine modification is found at Ser262.

This sequence belongs to the COPE family. As to quaternary structure, oligomeric complex that consists of at least the alpha, beta, beta', gamma, delta, epsilon and zeta subunits.

Its subcellular location is the cytoplasm. It is found in the golgi apparatus membrane. The protein localises to the cytoplasmic vesicle. It localises to the COPI-coated vesicle membrane. Functionally, the coatomer is a cytosolic protein complex that binds to dilysine motifs and reversibly associates with Golgi non-clathrin-coated vesicles, which further mediate biosynthetic protein transport from the ER, via the Golgi up to the trans Golgi network. The coatomer complex is required for budding from Golgi membranes, and is essential for the retrograde Golgi-to-ER transport of dilysine-tagged proteins. This chain is Probable coatomer subunit epsilon (sec28), found in Schizosaccharomyces pombe (strain 972 / ATCC 24843) (Fission yeast).